The sequence spans 337 residues: Inositol 2-dehydrogenase (337 aa).

It belongs to the Gfo/Idh/MocA family. In terms of assembly, homotetramer.

It carries out the reaction myo-inositol + NAD(+) = scyllo-inosose + NADH + H(+). Involved in the oxidation of myo-inositol (MI) to 2-keto-myo-inositol (2KMI or 2-inosose). In Burkholderia cenocepacia (strain HI2424), this protein is Inositol 2-dehydrogenase.